A 146-amino-acid polypeptide reads, in one-letter code: MSVAEIFERVDKNKDGKISWDEFAEAIRAFSPSITSEEIDNMFREIDVDGDNQIDVAEYASCLMLGGEGNKEDEDIVMKEAFDLYDIDGDGKISASEIHVVLKRLGEKQTIAECIAMVRAVDADGDGFVSFEEFKTMMSCNNKKLQ.

EF-hand domains are found at residues 1–33, 34–69, 73–108, and 109–144; these read MSVA…FSPS, ITSE…GGEG, DEDI…LGEK, and QTIA…NNKK. Residues aspartate 11, asparagine 13, aspartate 15, lysine 17, glutamate 22, aspartate 47, aspartate 49, aspartate 51, glutamine 53, glutamate 58, aspartate 86, aspartate 88, aspartate 90, lysine 92, glutamate 97, aspartate 122, aspartate 124, aspartate 126, and glutamate 133 each coordinate Ca(2+).

Functionally, potential calcium sensor. The protein is Probable calcium-binding protein CML32 (CML32) of Arabidopsis thaliana (Mouse-ear cress).